Consider the following 373-residue polypeptide: Indole glucosinolate O-methyltransferase 2 (373 aa).

Residues G217, D240, D260, M261, and K274 each coordinate S-adenosyl-L-homocysteine. The active-site Proton acceptor is the H278.

This sequence belongs to the class I-like SAM-binding methyltransferase superfamily. Cation-independent O-methyltransferase family.

It functions in the pathway secondary metabolite biosynthesis. Its function is as follows. Involved in indole glucosinolate biosynthesis. Catalyzes methoxylation reactions of the glucosinolate indole ring. Converts the hydroxy intermediates 4-hydroxy-indol-3-yl-methylglucosinolate (4OH-I3M) and 1-hydroxy-indol-3-yl-methylglucosinolate (1OH-I3M) to 4-methoxy-indol-3-yl-methylglucosinolate (4MO-I3M) and 1-methoxy-indol-3-yl-methylglucosinolate (1MO-I3M), respectively. This Arabidopsis thaliana (Mouse-ear cress) protein is Indole glucosinolate O-methyltransferase 2.